The sequence spans 132 residues: Probable prefoldin subunit 4 (132 aa).

It belongs to the prefoldin subunit beta family. In terms of assembly, heterohexamer of two PFD-alpha type and four PFD-beta type subunits.

Functionally, binds specifically to cytosolic chaperonin (c-CPN) and transfers target proteins to it. Binds to nascent polypeptide chain and promotes folding in an environment in which there are many competing pathways for nonnative proteins. The sequence is that of Probable prefoldin subunit 4 (pfdn4) from Dictyostelium discoideum (Social amoeba).